A 360-amino-acid chain; its full sequence is Phospho-N-acetylmuramoyl-pentapeptide-transferase (360 aa).

Helical transmembrane passes span 21–41, 73–93, 94–114, 132–152, 168–188, 199–219, 235–255, 263–283, 288–308, and 338–358; these read YITV…LWIG, TMGG…WANL, ANPY…IGFV, WKYF…YAIG, IMPQ…VGTS, GLAI…AWAT, FSAE…GFLW, VFMG…VAVL, FLLV…ILQV, and VIVR…VTLK.

This sequence belongs to the glycosyltransferase 4 family. MraY subfamily. Requires Mg(2+) as cofactor.

The protein resides in the cell inner membrane. The catalysed reaction is UDP-N-acetyl-alpha-D-muramoyl-L-alanyl-gamma-D-glutamyl-meso-2,6-diaminopimeloyl-D-alanyl-D-alanine + di-trans,octa-cis-undecaprenyl phosphate = di-trans,octa-cis-undecaprenyl diphospho-N-acetyl-alpha-D-muramoyl-L-alanyl-D-glutamyl-meso-2,6-diaminopimeloyl-D-alanyl-D-alanine + UMP. It functions in the pathway cell wall biogenesis; peptidoglycan biosynthesis. Functionally, catalyzes the initial step of the lipid cycle reactions in the biosynthesis of the cell wall peptidoglycan: transfers peptidoglycan precursor phospho-MurNAc-pentapeptide from UDP-MurNAc-pentapeptide onto the lipid carrier undecaprenyl phosphate, yielding undecaprenyl-pyrophosphoryl-MurNAc-pentapeptide, known as lipid I. The polypeptide is Phospho-N-acetylmuramoyl-pentapeptide-transferase (Pasteurella multocida (strain Pm70)).